The sequence spans 428 residues: MSAFIVLGAQWGDEGKGKMTDYLAENADVVVRFQGGNNAGHTVVVGEKEYKLHLIPSGILYNDKLNVIGNGVVLDPKALFEEINYLESLGVEITPDRLIISDRAHVIMPYHRILDGIKERARGNKDIGTTGKGIGPSYTDKMERSGIRVCDLIHKEVFEENLKETLEVKNKIITEIFGGRALDYNEIYNEYLGYAEKLRPFVKDISVIVNKKIKDGKEVLFEGAQGTLLDIDYGTYPYVTSSSTIAGGVCIGAGVGPTAITNAVGIAKAYTTRVGKGPFPTELLDSTGDWVREKGHEFGVTTGRARRCGWLDLVILKTSARISGLTSFAVTKIDTLAGLDTLKVCTGYRLNGEIIDYVPASLEDLAKCEPIYEEFEGWDDSIANARCYEDLPENAIKYLKKIEDFTETKVSIVSVGPKRDQTMMISEI.

GTP is bound by residues 12–18 and 40–42; these read GDEGKGK and GHT. Asp13 (proton acceptor) is an active-site residue. Mg(2+) is bound by residues Asp13 and Gly40. Residues 13–16, 38–41, Thr130, Arg144, Gln225, Thr240, and Arg304 each bind IMP; these read DEGK and NAGH. The Proton donor role is filled by His41. 300-306 is a substrate binding site; sequence VTTGRAR. Residues Arg306, 332 to 334, and 414 to 416 contribute to the GTP site; these read KID and SVG.

The protein belongs to the adenylosuccinate synthetase family. Homodimer. Mg(2+) is required as a cofactor.

It is found in the cytoplasm. It catalyses the reaction IMP + L-aspartate + GTP = N(6)-(1,2-dicarboxyethyl)-AMP + GDP + phosphate + 2 H(+). It participates in purine metabolism; AMP biosynthesis via de novo pathway; AMP from IMP: step 1/2. Its function is as follows. Plays an important role in the de novo pathway of purine nucleotide biosynthesis. Catalyzes the first committed step in the biosynthesis of AMP from IMP. This chain is Adenylosuccinate synthetase, found in Clostridium botulinum (strain ATCC 19397 / Type A).